We begin with the raw amino-acid sequence, 121 residues long: Small ribosomal subunit protein uS13 (121 aa).

A disordered region spans residues 94 to 121 (GLPLRGQRTRTNARTRKGPRRAAQSLKK).

The protein belongs to the universal ribosomal protein uS13 family. As to quaternary structure, part of the 30S ribosomal subunit. Forms a loose heterodimer with protein S19. Forms two bridges to the 50S subunit in the 70S ribosome.

Functionally, located at the top of the head of the 30S subunit, it contacts several helices of the 16S rRNA. In the 70S ribosome it contacts the 23S rRNA (bridge B1a) and protein L5 of the 50S subunit (bridge B1b), connecting the 2 subunits; these bridges are implicated in subunit movement. Contacts the tRNAs in the A and P-sites. The protein is Small ribosomal subunit protein uS13 of Paraburkholderia phytofirmans (strain DSM 17436 / LMG 22146 / PsJN) (Burkholderia phytofirmans).